The following is a 275-amino-acid chain: MISNLAYIDPVAFQLGPIEVHWYGIIIAAGILLGYFIAQEGAKRAGLHKDALVDIIFWSAIFGFITARIYFVIFQWPYYAANPAEIPMIWHGGIAIHGGLIGGFITGVIICRRNNHNPLQVGDIIAPSIILAQGIGRWGNFMNHEAHGGPVAKSVLENMHIPEFIINNMYIDGRYYQPTFLYESIWDVLGFALLLFLRKHLRIGETFFTYLIWYSIGRFFVEGLRTDSLMLTSNIRVAQLVSILLILIGIAMIIYRRFKYQPPKYKDVKALPWPK.

3 helical membrane passes run 18 to 38 (IEVHWYGIIIAAGILLGYFIA), 55 to 75 (IIFWSAIFGFITARIYFVIFQ), and 89 to 109 (IWHGGIAIHGGLIGGFITGVI). Residue arginine 137 participates in a 1,2-diacyl-sn-glycero-3-phospho-(1'-sn-glycerol) binding. 2 consecutive transmembrane segments (helical) span residues 203–223 (IGETFFTYLIWYSIGRFFVEG) and 235–255 (IRVAQLVSILLILIGIAMIIY).

Belongs to the Lgt family.

It is found in the cell membrane. It catalyses the reaction L-cysteinyl-[prolipoprotein] + a 1,2-diacyl-sn-glycero-3-phospho-(1'-sn-glycerol) = an S-1,2-diacyl-sn-glyceryl-L-cysteinyl-[prolipoprotein] + sn-glycerol 1-phosphate + H(+). It participates in protein modification; lipoprotein biosynthesis (diacylglyceryl transfer). Functionally, catalyzes the transfer of the diacylglyceryl group from phosphatidylglycerol to the sulfhydryl group of the N-terminal cysteine of a prolipoprotein, the first step in the formation of mature lipoproteins. In Staphylococcus carnosus (strain TM300), this protein is Phosphatidylglycerol--prolipoprotein diacylglyceryl transferase.